The chain runs to 172 residues: uncharacterized protein (172 aa).

The protein belongs to the flavoredoxin family. Requires FMN as cofactor.

This is an uncharacterized protein from Pyrococcus horikoshii (strain ATCC 700860 / DSM 12428 / JCM 9974 / NBRC 100139 / OT-3).